We begin with the raw amino-acid sequence, 503 residues long: UPF0522 protein C (503 aa).

Positions 1–18 are cleaved as a signal peptide; that stretch reads MKLFILIILSICLALVNS. N330, N337, and N370 each carry an N-linked (GlcNAc...) asparagine glycan.

It belongs to the UPF0522 family.

The protein resides in the secreted. The sequence is that of UPF0522 protein C from Dictyostelium discoideum (Social amoeba).